Consider the following 331-residue polypeptide: tRNA U34 carboxymethyltransferase (331 aa).

Residues lysine 91, tryptophan 105, lysine 110, glycine 130, 152–154, 181–182, methionine 196, tyrosine 200, and arginine 315 contribute to the carboxy-S-adenosyl-L-methionine site; these read DPS and IE.

It belongs to the class I-like SAM-binding methyltransferase superfamily. CmoB family. Homotetramer.

The catalysed reaction is carboxy-S-adenosyl-L-methionine + 5-hydroxyuridine(34) in tRNA = 5-carboxymethoxyuridine(34) in tRNA + S-adenosyl-L-homocysteine + H(+). Functionally, catalyzes carboxymethyl transfer from carboxy-S-adenosyl-L-methionine (Cx-SAM) to 5-hydroxyuridine (ho5U) to form 5-carboxymethoxyuridine (cmo5U) at position 34 in tRNAs. The sequence is that of tRNA U34 carboxymethyltransferase from Shewanella baltica (strain OS185).